Reading from the N-terminus, the 460-residue chain is MDFYNHAANILSDLSKKKGSIKQLAFNSKKHDPKRTYALVCETLKYKPVLDEIIARSELLVLEKKLKENLARVLVHDLLMSKRGLSISNGPIKECILRHKTRLNAEFVKLKVKKGVKSHEELALKNPVSLPRWLRINTIKSTKDEVLQGLGLDKVSSIEELGPDKFYIDDCVENLIAIDPSFPIVENSLYKEGKVIIQDKASCFPAAVLAGLTGHVGDIIDGCAAPGNKTTHLAACFPKSHIFAFERDAKRVQTLRKMVGISGANNVTIEHQDFTLTDPKSDLYRNVTHILLDPSCSGSGIVSRQDYLLGNEQDVTEDTERLENLCSFQSTILKHALQFPNCRHVTYSTCSVHRLENEQVVCEVLSQEPDWKCNSLTKTLPNWKTRGIPEYCAQPSMAEGMIRCKPGAGGTIGFFVANLYHPQREQETFKMYKNDDDTKKRKRKKKKKEVKKKARIQGEE.

Residues 223–229 (CAAPGNK), Glu-246, Asp-273, and Asp-293 each bind S-adenosyl-L-methionine. Residue Cys-350 is the Nucleophile of the active site. Positions 430–439 (KMYKNDDDTK) are enriched in basic and acidic residues. Residues 430 to 460 (KMYKNDDDTKKRKRKKKKKEVKKKARIQGEE) are disordered. Basic residues predominate over residues 440–460 (KRKRKKKKKEVKKKARIQGEE).

It belongs to the class I-like SAM-binding methyltransferase superfamily. RsmB/NOP family. Interacts with trm112.

Its subcellular location is the nucleus. The protein resides in the nucleolus. It catalyses the reaction a cytidine in 25S rRNA + S-adenosyl-L-methionine = a 5-methylcytidine in 25S rRNA + S-adenosyl-L-homocysteine + H(+). Its function is as follows. S-adenosyl-L-methionine-dependent methyltransferase that specifically methylates the C(5) position of a cytosine in 25S rRNA. The chain is 25S rRNA (cytosine-C(5))-methyltransferase rcm1 (rcm1) from Schizosaccharomyces pombe (strain 972 / ATCC 24843) (Fission yeast).